A 223-amino-acid chain; its full sequence is Bone marrow proteoglycan (223 aa).

Residues 1–16 (MKFPLLLALLVGGASA) form the signal peptide. The propeptide at 17–106 (LHLSSETSDS…TSLMGDSGCK (90 aa)) is acidic. Residues 20–81 (SSETSDSKSP…PGDEGAVSGQ (62 aa)) are disordered. Residue Thr-23 is glycosylated (O-linked (GalNAc...) threonine; partial). O-linked (GalNAc...) serine glycosylation is present at Ser-24. O-linked (Xyl...) (chondroitin sulfate) serine glycosylation is present at Ser-66. The C-type lectin domain occupies 124–223 (SVCRRCYRGT…VKRRPFICSY (100 aa)). 2 disulfide bridges follow: Cys-126-Cys-221 and Cys-198-Cys-213.

Post-translationally, nitrated.

It is found in the secreted. Its function is as follows. Cytotoxin and helminthotoxin. MBP also induces non-cytolytic histamine release from basophils. It is involved in antiparasitic defense mechanisms and immune hypersensitivity reactions. In Mus musculus (Mouse), this protein is Bone marrow proteoglycan (Prg2).